The following is a 270-amino-acid chain: Glutamate 5-kinase (270 aa).

Lys-17 serves as a coordination point for ATP. Residues Ser-57, Asp-144, and Asn-160 each coordinate substrate. Residues 180 to 181 (SD) and 222 to 228 (TGGMTSK) contribute to the ATP site.

This sequence belongs to the glutamate 5-kinase family.

It is found in the cytoplasm. It carries out the reaction L-glutamate + ATP = L-glutamyl 5-phosphate + ADP. The protein operates within amino-acid biosynthesis; L-proline biosynthesis; L-glutamate 5-semialdehyde from L-glutamate: step 1/2. Its function is as follows. Catalyzes the transfer of a phosphate group to glutamate to form L-glutamate 5-phosphate. The polypeptide is Glutamate 5-kinase (Lactococcus lactis subsp. cremoris (strain SK11)).